Here is a 1152-residue protein sequence, read N- to C-terminus: P3N-PIPO polyprotein (1152 aa).

The region spanning 292 to 437 (VMNQQTLTAL…HTLTHRMVQY (146 aa)) is the Peptidase S30 domain. Active-site for P1 proteinase activity residues include histidine 345, aspartate 354, and serine 388. The Involved in interaction with stylet and aphid transmission signature appears at 489–492 (KITC). The Involved in virions binding and aphid transmission motif lies at 747-749 (PTK). One can recognise a Peptidase C6 domain in the interval 773 to 895 (MFVAKDGYCY…ESEMQHYRVG (123 aa)). Active-site for helper component proteinase activity residues include cysteine 781 and histidine 854.

This sequence belongs to the potyviridae P3N-PIPO polyprotein family. As to quaternary structure, interacts (via PIPO domain) with host PCaP1 protein; this interaction may help to anchor the movement complex to the plasma membrane from which the complex could move to the plasmodesmata. Potyviral RNA is expressed as two polyproteins which undergo post-translational proteolytic processing. Genome polyprotein is processed by NIa-pro, P1 and HC-pro proteinases resulting in the production of at least ten individual proteins. P3N-PIPO is cleaved by P1 and HC-pro proteinases resulting in the production of three individual proteins. The P1 proteinase and the HC-pro cleave only their respective C-termini autocatalytically.

It is found in the host cell junction. The protein resides in the host plasmodesma. It catalyses the reaction Hydrolyzes a Gly-|-Gly bond at its own C-terminus, commonly in the sequence -Tyr-Xaa-Val-Gly-|-Gly, in the processing of the potyviral polyprotein.. Functionally, required for aphid transmission and also has proteolytic activity. Only cleaves a Gly-Gly dipeptide at its own C-terminus. Interacts with virions and aphid stylets. Acts as a suppressor of RNA-mediated gene silencing, also known as post-transcriptional gene silencing (PTGS), a mechanism of plant viral defense that limits the accumulation of viral RNAs. May have RNA-binding activity. Its function is as follows. Allows efficient cell to cell propagation, by bypassing the host cell wall barrier. Transports viral genome to neighboring plant cells directly through plasmosdesmata, without any budding. This is P3N-PIPO polyprotein from Carthamus tinctorius (Safflower).